The following is a 447-amino-acid chain: Glutamate--tRNA ligase 2 (447 aa).

The 'HIGH' region motif lies at 9–19 (PSPTGYLHIGN). The 'KMSKS' region motif lies at 240–244 (GLSKR). Position 243 (Lys243) interacts with ATP.

The protein belongs to the class-I aminoacyl-tRNA synthetase family. Glutamate--tRNA ligase type 1 subfamily. Monomer.

It is found in the cytoplasm. The enzyme catalyses tRNA(Glu) + L-glutamate + ATP = L-glutamyl-tRNA(Glu) + AMP + diphosphate. Functionally, catalyzes the attachment of glutamate to tRNA(Glu) in a two-step reaction: glutamate is first activated by ATP to form Glu-AMP and then transferred to the acceptor end of tRNA(Glu). In Methylobacterium sp. (strain 4-46), this protein is Glutamate--tRNA ligase 2.